The primary structure comprises 396 residues: Ribosomal RNA large subunit methyltransferase I (396 aa).

The region spanning 2–81 (TVSIYLAKGR…EAIDKDFFVR (80 aa)) is the PUA domain.

This sequence belongs to the methyltransferase superfamily. RlmI family.

The protein localises to the cytoplasm. The catalysed reaction is cytidine(1962) in 23S rRNA + S-adenosyl-L-methionine = 5-methylcytidine(1962) in 23S rRNA + S-adenosyl-L-homocysteine + H(+). In terms of biological role, specifically methylates the cytosine at position 1962 (m5C1962) of 23S rRNA. The polypeptide is Ribosomal RNA large subunit methyltransferase I (Aliivibrio fischeri (strain MJ11) (Vibrio fischeri)).